Reading from the N-terminus, the 856-residue chain is uncharacterized protein (856 aa).

This is an uncharacterized protein from Rickettsia felis (strain ATCC VR-1525 / URRWXCal2) (Rickettsia azadi).